The chain runs to 141 residues: Large-conductance mechanosensitive channel (141 aa).

2 consecutive transmembrane segments (helical) span residues 16-36 (VIDL…VDSL) and 86-106 (GNFI…FLMV).

Belongs to the MscL family. As to quaternary structure, homopentamer.

It is found in the cell inner membrane. Functionally, channel that opens in response to stretch forces in the membrane lipid bilayer. May participate in the regulation of osmotic pressure changes within the cell. The protein is Large-conductance mechanosensitive channel of Ralstonia nicotianae (strain ATCC BAA-1114 / GMI1000) (Ralstonia solanacearum).